The following is an 84-amino-acid chain: Hirudin-HM2 (84 aa).

An N-terminal signal peptide occupies residues 1–20; sequence MFSLKLFVVFLAVCICVSQA. The interaction with thrombin active site stretch occupies residues 21–23; that stretch reads VSY. Cystine bridges form between Cys-26/Cys-34, Cys-36/Cys-48, and Cys-42/Cys-57. Positions 53–84 are disordered; the sequence is SGNQCVHGEGTPKPKSQTEGDFEEIPDEDILN. O-linked (GalNAc...) threonine glycosylation occurs at Thr-63. Over residues 72-84 the composition is skewed to acidic residues; it reads GDFEEIPDEDILN. Residues 73 to 84 are interaction with fibrinogen-binding exosite of thrombin; it reads DFEEIPDEDILN.

This sequence belongs to the protease inhibitor I14 (hirudin) family.

Its subcellular location is the secreted. Its function is as follows. Hirudin is a potent thrombin-specific protease inhibitor. It forms a stable non-covalent complex with alpha-thrombin, thereby abolishing its ability to cleave fibrinogen. The polypeptide is Hirudin-HM2 (Hirudinaria manillensis (Asian medical leech)).